Consider the following 609-residue polypeptide: Meiotically up-regulated gene 28 protein (609 aa).

RRM domains are found at residues 20–103 (ISIY…YTHI) and 419–499 (CNLF…YAEK).

It is found in the cytoplasm. In terms of biological role, has a role in sporulation. The sequence is that of Meiotically up-regulated gene 28 protein (mug28) from Schizosaccharomyces pombe (strain 972 / ATCC 24843) (Fission yeast).